We begin with the raw amino-acid sequence, 468 residues long: Glutamate--tRNA ligase (468 aa).

The 'HIGH' region motif lies at 12–22 (PSPTGFIHLGN). A 'KMSKS' region motif is present at residues 244 to 248 (KMSKR). Lys-247 is an ATP binding site.

Belongs to the class-I aminoacyl-tRNA synthetase family. Glutamate--tRNA ligase type 1 subfamily. Monomer.

The protein resides in the cytoplasm. The catalysed reaction is tRNA(Glu) + L-glutamate + ATP = L-glutamyl-tRNA(Glu) + AMP + diphosphate. Its function is as follows. Catalyzes the attachment of glutamate to tRNA(Glu) in a two-step reaction: glutamate is first activated by ATP to form Glu-AMP and then transferred to the acceptor end of tRNA(Glu). This is Glutamate--tRNA ligase from Polynucleobacter asymbioticus (strain DSM 18221 / CIP 109841 / QLW-P1DMWA-1) (Polynucleobacter necessarius subsp. asymbioticus).